The primary structure comprises 466 residues: Vimentin (466 aa).

2 stretches are compositionally biased toward low complexity: residues 1–13 (MSTR…SYRR) and 20–31 (TASRPSSSRSYV). The interval 1-31 (MSTRTVSSSSYRRMFGGPGTASRPSSSRSYV) is disordered. An N-acetylserine modification is found at Ser-2. The tract at residues 2–95 (STRTVSSSSY…FSLADAINTE (94 aa)) is head. Ser-7 bears the Phosphoserine; alternate mark. O-linked (GlcNAc) serine; alternate glycosylation is present at Ser-7. Ser-8, Ser-9, and Ser-10 each carry phosphoserine. Thr-20 carries the post-translational modification Phosphothreonine. A phosphoserine mark is found at Ser-25 and Ser-26. Thr-33 is a glycosylation site (O-linked (GlcNAc) threonine). An O-linked (GlcNAc) serine; alternate glycan is attached at Ser-34. The residue at position 34 (Ser-34) is a Phosphoserine; by PKC; alternate. The residue at position 39 (Ser-39) is a Phosphoserine; by CaMK2, PKA, PKC and ROCK2. Phosphoserine is present on residues Ser-42, Ser-47, Ser-49, and Ser-51. Tyr-53 is subject to Phosphotyrosine. Position 55 is a phosphoserine (Ser-55). Ser-56 carries the phosphoserine; by CDK5 and CDK1 modification. Tyr-61 carries the post-translational modification Phosphotyrosine. Ser-66 is subject to Phosphoserine. At Ser-72 the chain carries Phosphoserine; by AURKB and ROCK2. Phosphoserine occurs at positions 73 and 87. Residues 96 to 131 (FKNTRTNEKVELQELNDRFANYIDKVRFLEQQNKIL) are coil 1A. The stretch at 96 to 131 (FKNTRTNEKVELQELNDRFANYIDKVRFLEQQNKIL) forms a coiled coil. The IF rod domain maps to 103 to 411 (EKVELQELND…KLLEGEESRI (309 aa)). A Glycyl lysine isopeptide (Lys-Gly) (interchain with G-Cter in SUMO2) cross-link involves residue Lys-104. Tyr-117 carries the post-translational modification Phosphotyrosine. N6-acetyllysine; alternate occurs at positions 120, 129, and 139. 2 positions are modified to N6-succinyllysine; alternate: Lys-120 and Lys-129. Glycyl lysine isopeptide (Lys-Gly) (interchain with G-Cter in SUMO2); alternate cross-links involve residues Lys-120, Lys-129, and Lys-139. The interval 132 to 153 (LAELEQLKGQGKSRLGDLYEEE) is linker 1. A Phosphoserine modification is found at Ser-144. A coiled-coil region spans residues 154 to 245 (MRELRRQVDQ…KLHDEEIQEL (92 aa)). The tract at residues 154–245 (MRELRRQVDQ…KLHDEEIQEL (92 aa)) is coil 1B. Residue Lys-168 is modified to N6-acetyllysine. Lys-188 carries the N6-acetyllysine; alternate modification. An N6-succinyllysine; alternate modification is found at Lys-188. Ser-214 is modified (phosphoserine). An N6-acetyllysine; alternate modification is found at Lys-223. A Glycyl lysine isopeptide (Lys-Gly) (interchain with G-Cter in SUMO2); alternate cross-link involves residue Lys-223. Ser-226 is modified (phosphoserine). Lys-235 is modified (N6-acetyllysine). Residues 246-268 (QAQIQEQHVQIDMDVSKPDLTAA) form a linker 12 region. Lys-262 participates in a covalent cross-link: Glycyl lysine isopeptide (Lys-Gly) (interchain with G-Cter in SUMO2). The interval 269-407 (LRDVRQQYES…ATYRKLLEGE (139 aa)) is coil 2. An N6-acetyllysine; alternate modification is found at Lys-294. Lys-294 is subject to N6-succinyllysine; alternate. Residue Lys-294 forms a Glycyl lysine isopeptide (Lys-Gly) (interchain with G-Cter in SUMO2); alternate linkage. A Phosphoserine modification is found at Ser-299. Residues 303–407 (NRNNDALRQA…ATYRKLLEGE (105 aa)) are a coiled coil. Lys-313 is covalently cross-linked (Glycyl lysine isopeptide (Lys-Gly) (interchain with G-Cter in SUMO2)). A Phosphoserine modification is found at Ser-325. The short motif at 326-329 (LTCE) is the [IL]-x-C-x-x-[DE] motif element. An N6-acetyllysine; alternate modification is found at Lys-373. Residue Lys-373 forms a Glycyl lysine isopeptide (Lys-Gly) (interchain with G-Cter in SUMO2); alternate linkage. The segment at 408–466 (ESRISLPLPNFSSLNLRETNLESLPLVDTHSKRTLLIKTVETRDGQVINETSQHHDDLE) is tail. Phosphoserine occurs at positions 409, 412, 419, and 420. Thr-426 is subject to Phosphothreonine. A Phosphoserine modification is found at Ser-430. Position 436 is a phosphothreonine (Thr-436). Residue Ser-438 is modified to Phosphoserine. A Glycyl lysine isopeptide (Lys-Gly) (interchain with G-Cter in SUMO2) cross-link involves residue Lys-439. Lys-445 carries the post-translational modification N6-acetyllysine; alternate. Lys-445 is modified (N6-succinyllysine; alternate). A Glycyl lysine isopeptide (Lys-Gly) (interchain with G-Cter in SUMO2); alternate cross-link involves residue Lys-445. Lys-445 participates in a covalent cross-link: Glycyl lysine isopeptide (Lys-Gly) (interchain with G-Cter in SUMO1); alternate. Thr-446 and Thr-458 each carry phosphothreonine. The residue at position 459 (Ser-459) is a Phosphoserine.

The protein belongs to the intermediate filament family. Homomer assembled from elementary dimers. Identified in complexes that contain VIM, EZR, AHNAK, BFSP1, BFSP2, ANK2, PLEC, PRX and spectrin. Interacts with BCAS3. Interacts with LGSN. Interacts with SYNM. Interacts (via rod region) with PLEC (via CH 1 domain). Interacts with STK33. Interacts with LARP6. Interacts with RAB8B. Interacts with TOR1A; the interaction associates TOR1A with the cytoskeleton. Interacts with TOR1AIP1. Interacts with TOR1AIP1. Interacts with DIAPH1. Interacts with EPPK1; interaction is dependent of higher-order structure of intermediate filament. Interacts with the non-receptor tyrosine kinase SRMS; the interaction leads to phosphorylation of VIM. Interacts with NOD2. Interacts (via head region) with CORO1C. Interacts with HDGF. Interacts with PRKCE (via phorbol-ester/DAG-type 2 domain). Interacts with BFSP2. Interacts with PPL. Interacts with PKP1 and PKP2. Interacts with SCRIB (via PDZ domains); the interaction protects SCRIB from proteasomal degradation and facilitates SCRIB localization to intermediate filaments, the interaction is reduced by cell contact inhibition. One of the most prominent phosphoproteins in various cells of mesenchymal origin. Phosphorylation is enhanced during cell division, at which time vimentin filaments are significantly reorganized. Phosphorylation by PKN1 inhibits the formation of filaments. Filament disassembly during mitosis is promoted by phosphorylation at Ser-55 as well as by nestin. Phosphorylated at Ser-56 by CDK5 during neutrophil secretion in the cytoplasm. Phosphorylated by STK33. Phosphorylated on tyrosine residues by SRMS. In terms of processing, S-nitrosylation is induced by interferon-gamma and oxidatively-modified low-densitity lipoprotein (LDL(ox)) possibly implicating the iNOS-S100A8/9 transnitrosylase complex.

It is found in the cytoplasm. The protein resides in the cytoskeleton. It localises to the nucleus matrix. The protein localises to the cell membrane. Vimentins are class-III intermediate filaments found in various non-epithelial cells, especially mesenchymal cells. Vimentin is attached to the nucleus, endoplasmic reticulum, and mitochondria, either laterally or terminally. Plays a role in cell directional movement, orientation, cell sheet organization and Golgi complex polarization at the cell migration front. Protects SCRIB from proteasomal degradation and facilitates its localization to intermediate filaments in a cell contact-mediated manner. In terms of biological role, involved with LARP6 in the stabilization of type I collagen mRNAs for CO1A1 and CO1A2. This Sus scrofa (Pig) protein is Vimentin (VIM).